The chain runs to 98 residues: NADH-ubiquinone oxidoreductase chain 4L (98 aa).

3 consecutive transmembrane segments (helical) span residues Met1–Val21, Ser29–Leu49, and Ile58–Leu78.

This sequence belongs to the complex I subunit 4L family. In terms of assembly, core subunit of respiratory chain NADH dehydrogenase (Complex I) which is composed of 45 different subunits.

It is found in the mitochondrion inner membrane. The catalysed reaction is a ubiquinone + NADH + 5 H(+)(in) = a ubiquinol + NAD(+) + 4 H(+)(out). Functionally, core subunit of the mitochondrial membrane respiratory chain NADH dehydrogenase (Complex I) which catalyzes electron transfer from NADH through the respiratory chain, using ubiquinone as an electron acceptor. Part of the enzyme membrane arm which is embedded in the lipid bilayer and involved in proton translocation. This chain is NADH-ubiquinone oxidoreductase chain 4L (MT-ND4L), found in Pan paniscus (Pygmy chimpanzee).